The chain runs to 254 residues: Ribosomal RNA small subunit methyltransferase G (254 aa).

S-adenosyl-L-methionine-binding positions include Gly-84, Phe-89, 136-137, and Arg-155; that span reads VE.

This sequence belongs to the methyltransferase superfamily. RNA methyltransferase RsmG family.

It is found in the cytoplasm. Functionally, specifically methylates the N7 position of a guanine in 16S rRNA. This is Ribosomal RNA small subunit methyltransferase G from Synechococcus sp. (strain CC9311).